The sequence spans 593 residues: Aspartate--tRNA(Asp/Asn) ligase (593 aa).

Glu-182 lines the L-aspartate pocket. The segment at 206-209 is aspartate; the sequence is QLFK. Arg-228 serves as a coordination point for L-aspartate. Residues 228–230 and Gln-237 each bind ATP; that span reads RDE. His-455 serves as a coordination point for L-aspartate. Glu-489 is a binding site for ATP. Arg-496 lines the L-aspartate pocket. 541–544 is an ATP binding site; that stretch reads GLDR.

Belongs to the class-II aminoacyl-tRNA synthetase family. Type 1 subfamily. In terms of assembly, homodimer.

It localises to the cytoplasm. It carries out the reaction tRNA(Asx) + L-aspartate + ATP = L-aspartyl-tRNA(Asx) + AMP + diphosphate. Functionally, aspartyl-tRNA synthetase with relaxed tRNA specificity since it is able to aspartylate not only its cognate tRNA(Asp) but also tRNA(Asn). Reaction proceeds in two steps: L-aspartate is first activated by ATP to form Asp-AMP and then transferred to the acceptor end of tRNA(Asp/Asn). This is Aspartate--tRNA(Asp/Asn) ligase from Geotalea uraniireducens (strain Rf4) (Geobacter uraniireducens).